Consider the following 243-residue polypeptide: Pyrimidodiazepine synthase (243 aa).

In terms of domain architecture, GST N-terminal spans 20 to 102; sequence GILRLYSMRF…YLDEQYPLRP (83 aa). The active-site Nucleophile is the cysteine 30. Glutathione-binding positions include lysine 57, valine 70, and 86–87; that span reads ES. The GST C-terminal domain occupies 107–230; it reads DPLKKVQDKL…VQAEFLRTRS (124 aa).

This sequence belongs to the GST superfamily. Omega family. Homodimer.

It carries out the reaction 2-amino-6-acetyl-3,7,8,9-tetrahydro-3H-pyrimido[4,5-b][1,4]diazepin-4-one + glutathione disulfide + H2O = 6-pyruvoyl-5,6,7,8-tetrahydropterin + 2 glutathione. Functionally, mediates the conversion of 2-amino-4-oxo-6-pyruvoyl-5,6,7,8-tetrahydropteridine (6-PTP; also named 6-pyruvoyltetrahydropterin) to 2-amino-6-acetyl-3,7,8,9-tetrahydro-3H-pyrimido(4,5-b)[1,4]diazepin-4-one (pyrimidodiazepine or PDA), a key intermediate in red eye pigment drosopterin biosynthesis. The sequence is that of Pyrimidodiazepine synthase from Drosophila melanogaster (Fruit fly).